A 444-amino-acid polypeptide reads, in one-letter code: NADH-quinone oxidoreductase subunit F (444 aa).

Gly-62–Gly-71 contributes to the NAD(+) binding site. Gly-177–Thr-224 is a binding site for FMN. Positions 354, 357, 360, and 401 each coordinate [4Fe-4S] cluster.

This sequence belongs to the complex I 51 kDa subunit family. In terms of assembly, composed of 13 different subunits. Subunits NuoCD, E, F, and G constitute the peripheral sector of the complex. [4Fe-4S] cluster serves as cofactor. FMN is required as a cofactor.

It catalyses the reaction a quinone + NADH + 5 H(+)(in) = a quinol + NAD(+) + 4 H(+)(out). Functionally, NDH-1 shuttles electrons from NADH, via FMN and iron-sulfur (Fe-S) centers, to quinones in the respiratory chain. Couples the redox reaction to proton translocation (for every two electrons transferred, four hydrogen ions are translocated across the cytoplasmic membrane), and thus conserves the redox energy in a proton gradient. The chain is NADH-quinone oxidoreductase subunit F (nuoF) from Buchnera aphidicola subsp. Baizongia pistaciae (strain Bp).